The chain runs to 129 residues: Large ribosomal subunit protein uL22 (129 aa).

Belongs to the universal ribosomal protein uL22 family. In terms of assembly, part of the 50S ribosomal subunit.

In terms of biological role, this protein binds specifically to 23S rRNA; its binding is stimulated by other ribosomal proteins, e.g. L4, L17, and L20. It is important during the early stages of 50S assembly. It makes multiple contacts with different domains of the 23S rRNA in the assembled 50S subunit and ribosome. Its function is as follows. The globular domain of the protein is located near the polypeptide exit tunnel on the outside of the subunit, while an extended beta-hairpin is found that lines the wall of the exit tunnel in the center of the 70S ribosome. This Prochlorococcus marinus (strain MIT 9211) protein is Large ribosomal subunit protein uL22.